The sequence spans 354 residues: MTELKNDRYLRALLRQPVDVTPVWMMRQAGRYLPEYKATRAQAGDFMSLCKNAELACEVTLQPLRRYPLDAAILFSDILTIPDAMGLGLYFEAGEGPRFTSPVACKADVDKLPIPDPEDELGYVMNAVRTIRRELKGDVPLIGFSGSPWTLATYMVEGGSSKAFTVIKKMMYADPQALHALLDKLAKSVTLYLNAQIKAGAQSVMIFDTWGGVLTGRDYQQFSLYYMHKIVDGLLRENDGRRVPVTLFTKGGGQWLEAMAETGCDALGLDWTTDIADARRRVGHKVALQGNMDPSMLYAPPARIEEEVATILAGFGQGEGHVFNLGHGIHQDVPPEHAGAFVDAVHRLSEQYHR.

Residues R27–R31, D77, Y154, T209, and H327 contribute to the substrate site.

It belongs to the uroporphyrinogen decarboxylase family. Homodimer.

Its subcellular location is the cytoplasm. The enzyme catalyses uroporphyrinogen III + 4 H(+) = coproporphyrinogen III + 4 CO2. The protein operates within porphyrin-containing compound metabolism; protoporphyrin-IX biosynthesis; coproporphyrinogen-III from 5-aminolevulinate: step 4/4. Functionally, catalyzes the decarboxylation of four acetate groups of uroporphyrinogen-III to yield coproporphyrinogen-III. This Citrobacter koseri (strain ATCC BAA-895 / CDC 4225-83 / SGSC4696) protein is Uroporphyrinogen decarboxylase.